The sequence spans 73 residues: Putative defensin-like protein 33 (73 aa).

Residues 1–25 form the signal peptide; the sequence is MASNKVSFIFILFLCVLSTAEFGEA. 3 cysteine pairs are disulfide-bonded: Cys-33-Cys-59, Cys-45-Cys-68, and Cys-49-Cys-70.

Belongs to the DEFL family.

It localises to the secreted. The chain is Putative defensin-like protein 33 from Arabidopsis thaliana (Mouse-ear cress).